Consider the following 139-residue polypeptide: Transcription antitermination protein NusB (139 aa).

Belongs to the NusB family.

In terms of biological role, involved in transcription antitermination. Required for transcription of ribosomal RNA (rRNA) genes. Binds specifically to the boxA antiterminator sequence of the ribosomal RNA (rrn) operons. This is Transcription antitermination protein NusB from Sodalis glossinidius (strain morsitans).